The following is a 460-amino-acid chain: Argininosuccinate lyase (460 aa).

The protein belongs to the lyase 1 family. Argininosuccinate lyase subfamily.

It is found in the cytoplasm. It carries out the reaction 2-(N(omega)-L-arginino)succinate = fumarate + L-arginine. Its pathway is amino-acid biosynthesis; L-arginine biosynthesis; L-arginine from L-ornithine and carbamoyl phosphate: step 3/3. This chain is Argininosuccinate lyase, found in Pelotomaculum thermopropionicum (strain DSM 13744 / JCM 10971 / SI).